Consider the following 97-residue polypeptide: Aspartyl/glutamyl-tRNA(Asn/Gln) amidotransferase subunit C (97 aa).

Belongs to the GatC family. Heterotrimer of A, B and C subunits.

The enzyme catalyses L-glutamyl-tRNA(Gln) + L-glutamine + ATP + H2O = L-glutaminyl-tRNA(Gln) + L-glutamate + ADP + phosphate + H(+). It carries out the reaction L-aspartyl-tRNA(Asn) + L-glutamine + ATP + H2O = L-asparaginyl-tRNA(Asn) + L-glutamate + ADP + phosphate + 2 H(+). Functionally, allows the formation of correctly charged Asn-tRNA(Asn) or Gln-tRNA(Gln) through the transamidation of misacylated Asp-tRNA(Asn) or Glu-tRNA(Gln) in organisms which lack either or both of asparaginyl-tRNA or glutaminyl-tRNA synthetases. The reaction takes place in the presence of glutamine and ATP through an activated phospho-Asp-tRNA(Asn) or phospho-Glu-tRNA(Gln). The protein is Aspartyl/glutamyl-tRNA(Asn/Gln) amidotransferase subunit C of Parasynechococcus marenigrum (strain WH8102).